Consider the following 638-residue polypeptide: Cell division control protein 45 homolog (638 aa).

The tract at residues 151-204 (ELSDEENSDSSNEREEEVEDDNRSVESYSSSDYQARSRRRFSEETTQRRAEIKE) is disordered. The span at 153 to 170 (SDEENSDSSNEREEEVED) shows a compositional bias: acidic residues. The span at 190–204 (RFSEETTQRRAEIKE) shows a compositional bias: basic and acidic residues.

This sequence belongs to the CDC45 family. In terms of assembly, interacts with sld3.

It is found in the nucleus. Its function is as follows. Required for initiation of chromosomal DNA replication. May have a role in regulating the MCM proteins nda1 and nda4. The sequence is that of Cell division control protein 45 homolog (sna41) from Schizosaccharomyces pombe (strain 972 / ATCC 24843) (Fission yeast).